A 914-amino-acid polypeptide reads, in one-letter code: Inter-alpha-trypsin inhibitor heavy chain H1 (914 aa).

The signal sequence occupies residues 1 to 30 (MDGAAVGLRVLLGLGLVSLLTLEAMPAAWG). A propeptide spanning residues 31-36 (LATTGR) is cleaved from the precursor. The 130-residue stretch at 39–168 (AREKRQAVDT…KATFQLTYEE (130 aa)) folds into the VIT domain. S-linked (Hex...) cysteine glycosylation is present at Cys-62. Ser-131 carries the post-translational modification Phosphoserine. 2 N-linked (GlcNAc...) asparagine glycosylation sites follow: Asn-288 and Asn-291. Residues 293–453 (SKNLVFVIDI…FNFLEVMSME (161 aa)) form the VWFA domain. Phosphothreonine is present on residues Thr-405 and Thr-410. N-linked (GlcNAc...) asparagine glycosylation is present at Asn-591. Thr-656 carries an O-linked (GalNAc...) threonine glycan. The residue at position 675 (Asp-675) is an Aspartate 1-(chondroitin 4-sulfate)-ester. Positions 676 to 914 (PHFIIYVPQK…HTDYIVPDIF (239 aa)) are excised as a propeptide.

The protein belongs to the ITIH family. In terms of assembly, I-alpha-I plasma protease inhibitors are assembled from one or two heavy chains (HC) and one light chain, bikunin. Inter-alpha-inhibitor (I-alpha-I) is composed of ITIH1/HC1, ITIH2/HC2 and bikunin. Interacts with TNFAIP6 (via Link and CUB domains). Post-translationally, heavy chains are linked to bikunin via chondroitin 4-sulfate esterified to the alpha-carboxyl of the C-terminal aspartate after propeptide cleavage. The S-linked glycan is composed of two 6-carbon sugars, possibly Glc or Gal.

Its subcellular location is the secreted. In terms of biological role, may act as a carrier of hyaluronan in serum or as a binding protein between hyaluronan and other matrix protein, including those on cell surfaces in tissues to regulate the localization, synthesis and degradation of hyaluronan which are essential to cells undergoing biological processes. This is Inter-alpha-trypsin inhibitor heavy chain H1 (ITIH1) from Mesocricetus auratus (Golden hamster).